The sequence spans 916 residues: Isoleucine--tRNA ligase (916 aa).

A 'HIGH' region motif is present at residues 57–67 (PYANGNLHMGH). Glu-554 is a binding site for L-isoleucyl-5'-AMP. The 'KMSKS' region motif lies at 595 to 599 (KMSKS). Lys-598 contributes to the ATP binding site. Cys-885, Cys-888, Cys-905, and Cys-908 together coordinate Zn(2+).

The protein belongs to the class-I aminoacyl-tRNA synthetase family. IleS type 1 subfamily. Monomer. Zn(2+) serves as cofactor.

It is found in the cytoplasm. The catalysed reaction is tRNA(Ile) + L-isoleucine + ATP = L-isoleucyl-tRNA(Ile) + AMP + diphosphate. In terms of biological role, catalyzes the attachment of isoleucine to tRNA(Ile). As IleRS can inadvertently accommodate and process structurally similar amino acids such as valine, to avoid such errors it has two additional distinct tRNA(Ile)-dependent editing activities. One activity is designated as 'pretransfer' editing and involves the hydrolysis of activated Val-AMP. The other activity is designated 'posttransfer' editing and involves deacylation of mischarged Val-tRNA(Ile). The chain is Isoleucine--tRNA ligase from Staphylococcus epidermidis (strain ATCC 12228 / FDA PCI 1200).